Consider the following 106-residue polypeptide: Large ribosomal subunit protein uL24 (106 aa).

This sequence belongs to the universal ribosomal protein uL24 family. As to quaternary structure, part of the 50S ribosomal subunit.

Its function is as follows. One of two assembly initiator proteins, it binds directly to the 5'-end of the 23S rRNA, where it nucleates assembly of the 50S subunit. In terms of biological role, one of the proteins that surrounds the polypeptide exit tunnel on the outside of the subunit. In Thermosipho melanesiensis (strain DSM 12029 / CIP 104789 / BI429), this protein is Large ribosomal subunit protein uL24.